The chain runs to 226 residues: Cytidylate kinase (226 aa).

Residue Gly12–Thr20 coordinates ATP.

This sequence belongs to the cytidylate kinase family. Type 1 subfamily.

The protein resides in the cytoplasm. The catalysed reaction is CMP + ATP = CDP + ADP. It catalyses the reaction dCMP + ATP = dCDP + ADP. The polypeptide is Cytidylate kinase (Xanthomonas campestris pv. campestris (strain 8004)).